The primary structure comprises 274 residues: Large ribosomal subunit protein uL2 (274 aa).

The segment at 222–274 is disordered; it reads GVAMNPVDHPHGGGEGRGKGHHPQSPWGQLAKGYKTRRGKKASDKLIVRRRNG. Residues 229–239 show a composition bias toward basic and acidic residues; sequence DHPHGGGEGRG.

The protein belongs to the universal ribosomal protein uL2 family. As to quaternary structure, part of the 50S ribosomal subunit. Forms a bridge to the 30S subunit in the 70S ribosome.

One of the primary rRNA binding proteins. Required for association of the 30S and 50S subunits to form the 70S ribosome, for tRNA binding and peptide bond formation. It has been suggested to have peptidyltransferase activity; this is somewhat controversial. Makes several contacts with the 16S rRNA in the 70S ribosome. In Thermosipho melanesiensis (strain DSM 12029 / CIP 104789 / BI429), this protein is Large ribosomal subunit protein uL2.